Consider the following 658-residue polypeptide: Biosynthetic arginine decarboxylase (658 aa).

Lys127 bears the N6-(pyridoxal phosphate)lysine mark. A substrate-binding site is contributed by 307-317 (FDVGGGLGVDY).

Belongs to the Orn/Lys/Arg decarboxylase class-II family. SpeA subfamily. As to quaternary structure, homotetramer. The cofactor is Mg(2+). Pyridoxal 5'-phosphate is required as a cofactor.

The protein resides in the periplasm. The enzyme catalyses L-arginine + H(+) = agmatine + CO2. It functions in the pathway amine and polyamine biosynthesis; agmatine biosynthesis; agmatine from L-arginine: step 1/1. In terms of biological role, catalyzes the biosynthesis of agmatine from arginine. The chain is Biosynthetic arginine decarboxylase (speA) from Escherichia coli O157:H7.